We begin with the raw amino-acid sequence, 327 residues long: GrpE protein homolog 2, mitochondrial (327 aa).

The transit peptide at 1-39 (MLVLRILSRVTRNAGIRSSLSAVTLPARNQTPVFSSRFH) directs the protein to the mitochondrion. The segment at 68–140 (SSSTSPESDE…DSESDDDELS (73 aa)) is disordered. Composition is skewed to basic and acidic residues over residues 75-93 (SDEKKTHTEASKTSEEKPT) and 103-113 (SESKDSVTDSA). Residues 130–140 (SDSESDDDELS) are compositionally biased toward acidic residues.

Belongs to the GrpE family. As to quaternary structure, probable component of the PAM complex, at least composed of SSC1 (mtHsp70), MGE1, TIM44, PAM16/TIM16, PAM17 and PAM18/TIM14. Interacts with SSQ1.

The protein localises to the mitochondrion matrix. Functionally, essential component of the PAM complex, a complex required for the translocation of transit peptide-containing proteins from the inner membrane into the mitochondrial matrix in an ATP-dependent manner. Seems to control the nucleotide-dependent binding of mitochondrial HSP70 to substrate proteins. Binds ATP. Interacts with copper ions Cu(2+). Confers thermotolerance to long-term exposure at moderately high temperature (TMHT at 35 degrees Celsius). This chain is GrpE protein homolog 2, mitochondrial, found in Arabidopsis thaliana (Mouse-ear cress).